A 432-amino-acid polypeptide reads, in one-letter code: Glutamyl-tRNA reductase (432 aa).

Substrate is bound by residues 49–52 (TCNR), Ser109, 114–116 (EGQ), and Gln120. The Nucleophile role is filled by Cys50. 198-203 (GAGRMS) lines the NADP(+) pocket.

The protein belongs to the glutamyl-tRNA reductase family. Homodimer.

The catalysed reaction is (S)-4-amino-5-oxopentanoate + tRNA(Glu) + NADP(+) = L-glutamyl-tRNA(Glu) + NADPH + H(+). The protein operates within porphyrin-containing compound metabolism; protoporphyrin-IX biosynthesis; 5-aminolevulinate from L-glutamyl-tRNA(Glu): step 1/2. It participates in porphyrin-containing compound metabolism; chlorophyll biosynthesis. Functionally, catalyzes the NADPH-dependent reduction of glutamyl-tRNA(Glu) to glutamate 1-semialdehyde (GSA). The polypeptide is Glutamyl-tRNA reductase (Parasynechococcus marenigrum (strain WH8102)).